The primary structure comprises 285 residues: Pyrroline-5-carboxylate reductase (285 aa).

This sequence belongs to the pyrroline-5-carboxylate reductase family. In terms of assembly, homotetramer.

It catalyses the reaction L-proline + NADP(+) = (S)-1-pyrroline-5-carboxylate + NADPH + 2 H(+). It carries out the reaction L-proline + NAD(+) = (S)-1-pyrroline-5-carboxylate + NADH + 2 H(+). Its pathway is amino-acid biosynthesis; L-proline biosynthesis; L-proline from L-glutamate 5-semialdehyde: step 1/1. This Kluyveromyces lactis (strain ATCC 8585 / CBS 2359 / DSM 70799 / NBRC 1267 / NRRL Y-1140 / WM37) (Yeast) protein is Pyrroline-5-carboxylate reductase.